We begin with the raw amino-acid sequence, 238 residues long: Ion-translocating oxidoreductase complex subunit E (238 aa).

Transmembrane regions (helical) follow at residues 41 to 61 (LGLG…VSLV), 71 to 91 (LPAF…LMQA), 95 to 115 (ELYQ…VILG), 130 to 150 (SFDG…LGGL), and 184 to 204 (GFLL…LIAL).

This sequence belongs to the NqrDE/RnfAE family. In terms of assembly, the complex is composed of six subunits: RnfA, RnfB, RnfC, RnfD, RnfE and RnfG.

Its subcellular location is the cell inner membrane. In terms of biological role, part of a membrane-bound complex that couples electron transfer with translocation of ions across the membrane. This Pseudomonas aeruginosa (strain UCBPP-PA14) protein is Ion-translocating oxidoreductase complex subunit E.